The primary structure comprises 862 residues: Probable disease resistance protein At5g43740 (862 aa).

Residues 24–61 (RNYIHMMESNLDALQKTMEELKNGRDDLLGRVSIEEDK) adopt a coiled-coil conformation. Positions 135 to 438 (MVAQEIIHKV…CEGFINPNRY (304 aa)) constitute an NB-ARC domain. 178-185 (GMGGVGKT) lines the ATP pocket. 4 LRR repeats span residues 511–532 (IVRTMSFTCTQIKKISCRSKCP), 533–555 (NLSTLLILDNRLLVKISNRFFRF), 558–580 (KLVVLDLSANLDLIKLPEEISNL), and 582–604 (SLQYLNISLTGIKSLPVGLKKLR).

The protein belongs to the disease resistance NB-LRR family.

In terms of biological role, probable disease resistance protein. The polypeptide is Probable disease resistance protein At5g43740 (Arabidopsis thaliana (Mouse-ear cress)).